The following is an 82-amino-acid chain: Acyl carrier protein (82 aa).

The region spanning Pro-4–Leu-79 is the Carrier domain. Ser-39 carries the O-(pantetheine 4'-phosphoryl)serine modification.

The protein belongs to the acyl carrier protein (ACP) family. 4'-phosphopantetheine is transferred from CoA to a specific serine of apo-ACP by AcpS. This modification is essential for activity because fatty acids are bound in thioester linkage to the sulfhydryl of the prosthetic group.

The protein localises to the cytoplasm. The protein operates within lipid metabolism; fatty acid biosynthesis. Carrier of the growing fatty acid chain in fatty acid biosynthesis. In Roseiflexus sp. (strain RS-1), this protein is Acyl carrier protein.